A 202-amino-acid polypeptide reads, in one-letter code: Coiled-coil domain-containing protein 85B (202 aa).

N-acetylmethionine is present on methionine 1. Coiled-coil stretches lie at residues 43-90 (GRLM…ERQR) and 118-147 (QKLA…LGEE). The disordered stretch occupies residues 148 to 202 (WGPRGGPSGAGGSGAGPAPELALPPCGPRDLGDGSSSTGSVGSPDQLPLACSPDD). Positions 150–162 (PRGGPSGAGGSGA) are enriched in gly residues. Low complexity predominate over residues 180–190 (DGSSSTGSVGS).

Belongs to the CCDC85 family. As to quaternary structure, interacts with CEBPB. Interacts with EURL. May interact with CEBPD. Interacts with MCRS1. Interacts with TCF7L2; competes with CTNNB1. Interacts with ANKRD26. Interacts with the beta-catenin family proteins ARVCF, CTNND1, CTNND2 and PKP4. In terms of assembly, (Microbial infection) Interacts with the viral phosphoprotein hepatitis delta antigen (HDAG); this interaction affects hepatitis delta virus (HDV) genomic replication in intact cells. In terms of tissue distribution, widely expressed including liver.

It is found in the nucleus. Its subcellular location is the cytoplasm. The protein localises to the cytoskeleton. It localises to the microtubule organizing center. The protein resides in the centrosome. It is found in the cell junction. Its subcellular location is the adherens junction. Its function is as follows. Functions as a transcriptional repressor. May inhibit the activity of CTNNB1 in a TP53-dependent manner and thus regulate cell growth. May function in adipocyte differentiation, negatively regulating mitotic clonal expansion. Plays a role in cell-cell adhesion and epithelium development through its interaction with proteins of the beta-catenin family. (Microbial infection) Plays a role in hepatitis delta virus (HDV) genomic replication. This Homo sapiens (Human) protein is Coiled-coil domain-containing protein 85B (CCDC85B).